Here is a 204-residue protein sequence, read N- to C-terminus: Ribosomal RNA small subunit methyltransferase G (204 aa).

S-adenosyl-L-methionine contacts are provided by residues Gly74, Leu79, 125 to 126 (AY), and Arg138.

The protein belongs to the methyltransferase superfamily. RNA methyltransferase RsmG family.

The protein resides in the cytoplasm. Specifically methylates the N7 position of a guanine in 16S rRNA. The sequence is that of Ribosomal RNA small subunit methyltransferase G from Brachyspira hyodysenteriae (strain ATCC 49526 / WA1).